The following is a 46-amino-acid chain: Protein PsbN (46 aa).

The helical transmembrane segment at glycine 7–tyrosine 27 threads the bilayer.

Belongs to the PsbN family.

It localises to the cellular thylakoid membrane. Its function is as follows. May play a role in photosystem I and II biogenesis. The chain is Protein PsbN from Synechococcus elongatus (strain ATCC 33912 / PCC 7942 / FACHB-805) (Anacystis nidulans R2).